Consider the following 274-residue polypeptide: Dermonecrotic toxin SdSicTox-betaIIB1ai (274 aa).

Residue histidine 5 is part of the active site. Glutamate 25 and aspartate 27 together coordinate Mg(2+). Residue histidine 41 is the Nucleophile of the active site. 2 disulfide bridges follow: cysteine 45-cysteine 51 and cysteine 47-cysteine 190. Aspartate 85 contributes to the Mg(2+) binding site.

It belongs to the arthropod phospholipase D family. Class II subfamily. Mg(2+) is required as a cofactor. In terms of tissue distribution, expressed by the venom gland.

It is found in the secreted. The catalysed reaction is an N-(acyl)-sphingosylphosphocholine = an N-(acyl)-sphingosyl-1,3-cyclic phosphate + choline. It catalyses the reaction an N-(acyl)-sphingosylphosphoethanolamine = an N-(acyl)-sphingosyl-1,3-cyclic phosphate + ethanolamine. It carries out the reaction a 1-acyl-sn-glycero-3-phosphocholine = a 1-acyl-sn-glycero-2,3-cyclic phosphate + choline. The enzyme catalyses a 1-acyl-sn-glycero-3-phosphoethanolamine = a 1-acyl-sn-glycero-2,3-cyclic phosphate + ethanolamine. Dermonecrotic toxins cleave the phosphodiester linkage between the phosphate and headgroup of certain phospholipids (sphingolipid and lysolipid substrates), forming an alcohol (often choline) and a cyclic phosphate. This toxin acts on sphingomyelin (SM). It may also act on ceramide phosphoethanolamine (CPE), lysophosphatidylcholine (LPC) and lysophosphatidylethanolamine (LPE), but not on lysophosphatidylserine (LPS), and lysophosphatidylglycerol (LPG). It acts by transphosphatidylation, releasing exclusively cyclic phosphate products as second products. Induces dermonecrosis, hemolysis, increased vascular permeability, edema, inflammatory response, and platelet aggregation. This Sicarius cf. damarensis (strain GJB-2008) (Six-eyed sand spider) protein is Dermonecrotic toxin SdSicTox-betaIIB1ai.